The chain runs to 330 residues: 4-hydroxythreonine-4-phosphate dehydrogenase (330 aa).

Threonine 133 provides a ligand contact to substrate. A divalent metal cation contacts are provided by histidine 161, histidine 206, and histidine 261. Substrate is bound by residues lysine 269, asparagine 278, and arginine 287.

Belongs to the PdxA family. Homodimer. The cofactor is Zn(2+). It depends on Mg(2+) as a cofactor. Co(2+) serves as cofactor.

It localises to the cytoplasm. It carries out the reaction 4-(phosphooxy)-L-threonine + NAD(+) = 3-amino-2-oxopropyl phosphate + CO2 + NADH. Its pathway is cofactor biosynthesis; pyridoxine 5'-phosphate biosynthesis; pyridoxine 5'-phosphate from D-erythrose 4-phosphate: step 4/5. Catalyzes the NAD(P)-dependent oxidation of 4-(phosphooxy)-L-threonine (HTP) into 2-amino-3-oxo-4-(phosphooxy)butyric acid which spontaneously decarboxylates to form 3-amino-2-oxopropyl phosphate (AHAP). In Xylella fastidiosa (strain 9a5c), this protein is 4-hydroxythreonine-4-phosphate dehydrogenase.